A 235-amino-acid chain; its full sequence is 2-C-methyl-D-erythritol 4-phosphate cytidylyltransferase (235 aa).

The protein belongs to the IspD/TarI cytidylyltransferase family. IspD subfamily.

It carries out the reaction 2-C-methyl-D-erythritol 4-phosphate + CTP + H(+) = 4-CDP-2-C-methyl-D-erythritol + diphosphate. It functions in the pathway isoprenoid biosynthesis; isopentenyl diphosphate biosynthesis via DXP pathway; isopentenyl diphosphate from 1-deoxy-D-xylulose 5-phosphate: step 2/6. In terms of biological role, catalyzes the formation of 4-diphosphocytidyl-2-C-methyl-D-erythritol from CTP and 2-C-methyl-D-erythritol 4-phosphate (MEP). The protein is 2-C-methyl-D-erythritol 4-phosphate cytidylyltransferase of Leptospira borgpetersenii serovar Hardjo-bovis (strain L550).